The chain runs to 295 residues: Elongation factor Ts (295 aa).

Positions 79-82 (TDFV) are involved in Mg(2+) ion dislocation from EF-Tu.

The protein belongs to the EF-Ts family.

The protein resides in the cytoplasm. Associates with the EF-Tu.GDP complex and induces the exchange of GDP to GTP. It remains bound to the aminoacyl-tRNA.EF-Tu.GTP complex up to the GTP hydrolysis stage on the ribosome. The chain is Elongation factor Ts from Mycoplasma mycoides subsp. mycoides SC (strain CCUG 32753 / NCTC 10114 / PG1).